Here is a 380-residue protein sequence, read N- to C-terminus: Homoserine O-acetyltransferase (380 aa).

Positions 70-366 constitute an AB hydrolase-1 domain; it reads NAVLVFHALT…SPHGHDAFLI (297 aa). Ser186 (nucleophile) is an active-site residue. A substrate-binding site is contributed by Arg250. Residues Asp333 and His361 contribute to the active site. Position 362 (Asp362) interacts with substrate.

It belongs to the AB hydrolase superfamily. MetX family. Homodimer.

It localises to the cytoplasm. The catalysed reaction is L-homoserine + acetyl-CoA = O-acetyl-L-homoserine + CoA. It functions in the pathway amino-acid biosynthesis; L-methionine biosynthesis via de novo pathway; O-acetyl-L-homoserine from L-homoserine: step 1/1. In terms of biological role, transfers an acetyl group from acetyl-CoA to L-homoserine, forming acetyl-L-homoserine. This is Homoserine O-acetyltransferase from Thermus thermophilus (strain ATCC BAA-163 / DSM 7039 / HB27).